Here is a 227-residue protein sequence, read N- to C-terminus: UPF0758 protein LPC_1989 (227 aa).

The 124-residue stretch at 102-225 folds into the MPN domain; sequence QLSNTQQTYA…YSIFAENKWV (124 aa). Positions 173, 175, and 186 each coordinate Zn(2+). The short motif at 173-186 is the JAMM motif element; that stretch reads HNHPSGLSDASQQD.

It belongs to the UPF0758 family.

This Legionella pneumophila (strain Corby) protein is UPF0758 protein LPC_1989.